A 255-amino-acid polypeptide reads, in one-letter code: 5'-nucleotidase SurE (255 aa).

A divalent metal cation-binding residues include Asp-8, Asp-9, Ser-39, and Asn-91.

Belongs to the SurE nucleotidase family. Requires a divalent metal cation as cofactor.

It localises to the cytoplasm. It carries out the reaction a ribonucleoside 5'-phosphate + H2O = a ribonucleoside + phosphate. In terms of biological role, nucleotidase that shows phosphatase activity on nucleoside 5'-monophosphates. This Acinetobacter baumannii (strain ATCC 17978 / DSM 105126 / CIP 53.77 / LMG 1025 / NCDC KC755 / 5377) protein is 5'-nucleotidase SurE.